Reading from the N-terminus, the 399-residue chain is Acetate kinase (399 aa).

N7 lines the Mg(2+) pocket. K14 is an ATP binding site. R91 contacts substrate. D148 (proton donor/acceptor) is an active-site residue. ATP contacts are provided by residues 208-212 (HLGNG), 283-285 (DFR), and 331-335 (GLGEN). Mg(2+) is bound at residue E384.

It belongs to the acetokinase family. In terms of assembly, homodimer. The cofactor is Mg(2+). Mn(2+) serves as cofactor.

Its subcellular location is the cytoplasm. The catalysed reaction is acetate + ATP = acetyl phosphate + ADP. The protein operates within metabolic intermediate biosynthesis; acetyl-CoA biosynthesis; acetyl-CoA from acetate: step 1/2. In terms of biological role, catalyzes the formation of acetyl phosphate from acetate and ATP. Can also catalyze the reverse reaction. The polypeptide is Acetate kinase (Desulfitobacterium hafniense (strain Y51)).